A 248-amino-acid chain; its full sequence is Protein PIMREG (248 aa).

Positions 1–10 (MASRWQNMGT) are enriched in polar residues. The segment at 1-32 (MASRWQNMGTSVRRRSLQHQEQLEDSKELQPV) is disordered. Phosphoserine is present on residues S11 and S16. 2 short sequence motifs (D-box) span residues 14–17 (RRSL) and 53–56 (RLPL). The interval 117–205 (KARRRKRGAQ…PSESDSDLEP (89 aa)) is disordered. S129 bears the Phosphoserine mark. S131 carries the phosphoserine; by UHMK1; in vitro modification. Composition is skewed to polar residues over residues 132–143 (PTHSLSQKSTRL) and 186–198 (PYSS…SPSE). Phosphoserine occurs at positions 199 and 201.

As to quaternary structure, isoform 1 and isoform 2 interact with PICALM; this interaction may target PICALM to the nucleus. During mitosis, associates with HDAC2 and MTA2 subunits of the chromatin-remodeling NuRD complex; this association is strongest at prometaphase and decreases as the cell progresses through metaphase and anaphase. Post-translationally, ubiquitinated by the anaphase-promoting complex/cyclosome (APC/C) complex in the presence of FZR1, leading to its degradation by the proteasome during mitotic exit. However, degradation is not essential for normal mitotic progression within a single cell cycle. As to expression, expressed in thymus (at protein level). Detected in spleen, colon, ovary and small intestines.

It localises to the nucleus. Its subcellular location is the nucleolus. In terms of biological role, during mitosis, may play a role in the control of metaphase-to-anaphase transition. In Homo sapiens (Human), this protein is Protein PIMREG.